The chain runs to 105 residues: Large ribosomal subunit protein bL21 (105 aa).

This sequence belongs to the bacterial ribosomal protein bL21 family. As to quaternary structure, part of the 50S ribosomal subunit. Contacts protein L20.

Functionally, this protein binds to 23S rRNA in the presence of protein L20. In Dictyoglomus thermophilum (strain ATCC 35947 / DSM 3960 / H-6-12), this protein is Large ribosomal subunit protein bL21.